The primary structure comprises 156 residues: ATP synthase subunit b (156 aa).

A helical membrane pass occupies residues 12–32; the sequence is VAFFIFVLFCMKYVWPPVIAA.

The protein belongs to the ATPase B chain family. F-type ATPases have 2 components, F(1) - the catalytic core - and F(0) - the membrane proton channel. F(1) has five subunits: alpha(3), beta(3), gamma(1), delta(1), epsilon(1). F(0) has three main subunits: a(1), b(2) and c(10-14). The alpha and beta chains form an alternating ring which encloses part of the gamma chain. F(1) is attached to F(0) by a central stalk formed by the gamma and epsilon chains, while a peripheral stalk is formed by the delta and b chains.

It is found in the cell inner membrane. In terms of biological role, f(1)F(0) ATP synthase produces ATP from ADP in the presence of a proton or sodium gradient. F-type ATPases consist of two structural domains, F(1) containing the extramembraneous catalytic core and F(0) containing the membrane proton channel, linked together by a central stalk and a peripheral stalk. During catalysis, ATP synthesis in the catalytic domain of F(1) is coupled via a rotary mechanism of the central stalk subunits to proton translocation. Component of the F(0) channel, it forms part of the peripheral stalk, linking F(1) to F(0). The chain is ATP synthase subunit b from Pseudomonas syringae pv. tomato (strain ATCC BAA-871 / DC3000).